The following is a 109-amino-acid chain: Cell division protein ZapA (109 aa).

Positions Pro21–Arg99 form a coiled coil.

The protein belongs to the ZapA family. Type 1 subfamily. Homodimer. Interacts with FtsZ.

It localises to the cytoplasm. Functionally, activator of cell division through the inhibition of FtsZ GTPase activity, therefore promoting FtsZ assembly into bundles of protofilaments necessary for the formation of the division Z ring. It is recruited early at mid-cell but it is not essential for cell division. This chain is Cell division protein ZapA, found in Klebsiella pneumoniae (strain 342).